The sequence spans 184 residues: Trypsin/chymotrypsin inhibitor (184 aa).

2 cysteine pairs are disulfide-bonded: Cys39–Cys84 and Cys136–Cys147.

This sequence belongs to the protease inhibitor I3 (leguminous Kunitz-type inhibitor) family. In terms of assembly, homodimer.

Its function is as follows. Inhibits trypsin and alpha-chymotrypsin. The chain is Trypsin/chymotrypsin inhibitor from Alocasia macrorrhizos (Giant taro).